Consider the following 271-residue polypeptide: Tryptophan synthase alpha chain (271 aa).

Active-site proton acceptor residues include Glu49 and Asp60.

It belongs to the TrpA family. In terms of assembly, tetramer of two alpha and two beta chains.

It catalyses the reaction (1S,2R)-1-C-(indol-3-yl)glycerol 3-phosphate + L-serine = D-glyceraldehyde 3-phosphate + L-tryptophan + H2O. It functions in the pathway amino-acid biosynthesis; L-tryptophan biosynthesis; L-tryptophan from chorismate: step 5/5. In terms of biological role, the alpha subunit is responsible for the aldol cleavage of indoleglycerol phosphate to indole and glyceraldehyde 3-phosphate. In Rhizorhabdus wittichii (strain DSM 6014 / CCUG 31198 / JCM 15750 / NBRC 105917 / EY 4224 / RW1) (Sphingomonas wittichii), this protein is Tryptophan synthase alpha chain.